The chain runs to 384 residues: Autophagy-related protein 25 (384 aa).

2 coiled-coil regions span residues 132-236 and 342-379; these read KETA…RRAS and KKNNQTDKDQEIASLRNRLSEMEQNYERVLATMEQWKT. Positions 224–247 are disordered; that stretch reads ESRLSNMNKRRASPRDDAEAEPKR. The span at 236-247 shows a compositional bias: basic and acidic residues; that stretch reads SPRDDAEAEPKR.

Belongs to the ADIP family.

The protein resides in the preautophagosomal structure membrane. Functionally, specifically required for selective degradation of peroxisomes via macropexophagy. The sequence is that of Autophagy-related protein 25 (ATG25) from Pichia angusta (Yeast).